A 196-amino-acid polypeptide reads, in one-letter code: Imidazoleglycerol-phosphate dehydratase (196 aa).

Belongs to the imidazoleglycerol-phosphate dehydratase family.

It localises to the cytoplasm. The enzyme catalyses D-erythro-1-(imidazol-4-yl)glycerol 3-phosphate = 3-(imidazol-4-yl)-2-oxopropyl phosphate + H2O. The protein operates within amino-acid biosynthesis; L-histidine biosynthesis; L-histidine from 5-phospho-alpha-D-ribose 1-diphosphate: step 6/9. This is Imidazoleglycerol-phosphate dehydratase from Clostridium novyi (strain NT).